Here is a 799-residue protein sequence, read N- to C-terminus: Transcriptional activator FLO8 (799 aa).

Polar residues predominate over residues methionine 1–proline 10. 8 disordered regions span residues methionine 1–tyrosine 20, threonine 37–lysine 68, alanine 101–phenylalanine 127, threonine 255–lysine 406, asparagine 431–leucine 503, glutamate 568–phenylalanine 622, valine 644–aspartate 691, and alanine 705–glutamine 758. The segment covering glutamine 41–glutamine 55 has biased composition (low complexity). Residues cysteine 73–arginine 105 enclose the LisH domain. A compositionally biased stretch (polar residues) spans aspartate 270–threonine 285. The span at asparagine 307–asparagine 317 shows a compositional bias: low complexity. The span at lysine 318–proline 340 shows a compositional bias: polar residues. The segment covering threonine 341–lysine 353 has biased composition (low complexity). Residues alanine 354 to asparagine 370 are compositionally biased toward basic residues. Polar residues-rich tracts occupy residues asparagine 371–glutamate 396 and lysine 460–valine 480. Basic residues predominate over residues glycine 482–serine 497. Composition is skewed to polar residues over residues serine 584–serine 593 and glycine 660–threonine 675.

Belongs to the FLO8 family.

The protein localises to the nucleus. Its function is as follows. Required for diploid filamentous growth, haploid invasive growth and flocculation. Putative transcriptional activator of FLO1. The sequence is that of Transcriptional activator FLO8 (FLO8) from Saccharomyces cerevisiae (strain ATCC 204508 / S288c) (Baker's yeast).